A 406-amino-acid polypeptide reads, in one-letter code: Coenzyme A biosynthesis bifunctional protein CoaBC (406 aa).

The tract at residues 1 to 191 is phosphopantothenoylcysteine decarboxylase; it reads MLNNRNVLLC…ETSAPLEGKH (191 aa). The Proton donor role is filled by Cys-157. The tract at residues 192–406 is phosphopantothenate--cysteine ligase; sequence VVITAGPTRE…ALSKQTGERS (215 aa). Residues Asp-281, Lys-291, Phe-325, Lys-339, and Lys-343 each coordinate CTP.

In the N-terminal section; belongs to the HFCD (homo-oligomeric flavin containing Cys decarboxylase) superfamily. This sequence in the C-terminal section; belongs to the PPC synthetase family. It depends on Mg(2+) as a cofactor. FMN is required as a cofactor.

It carries out the reaction N-[(R)-4-phosphopantothenoyl]-L-cysteine + H(+) = (R)-4'-phosphopantetheine + CO2. The catalysed reaction is (R)-4'-phosphopantothenate + L-cysteine + CTP = N-[(R)-4-phosphopantothenoyl]-L-cysteine + CMP + diphosphate + H(+). It functions in the pathway cofactor biosynthesis; coenzyme A biosynthesis; CoA from (R)-pantothenate: step 2/5. It participates in cofactor biosynthesis; coenzyme A biosynthesis; CoA from (R)-pantothenate: step 3/5. Functionally, catalyzes two sequential steps in the biosynthesis of coenzyme A. In the first step cysteine is conjugated to 4'-phosphopantothenate to form 4-phosphopantothenoylcysteine. In the second step the latter compound is decarboxylated to form 4'-phosphopantotheine. In Bacillus subtilis (strain 168), this protein is Coenzyme A biosynthesis bifunctional protein CoaBC.